The chain runs to 682 residues: Potassium-transporting ATPase ATP-binding subunit (682 aa).

Transmembrane regions (helical) follow at residues 34–54 (PVMF…IAMA), 62–82 (ALFS…ANFA), 219–239 (IALT…TATL), and 254–274 (VLVA…LSAI). D307 functions as the 4-aspartylphosphate intermediate in the catalytic mechanism. ATP contacts are provided by residues D344, E348, 377 to 384 (FTAQSRMS), and K395. Mg(2+) contacts are provided by D518 and D522. Transmembrane regions (helical) follow at residues 588–608 (FAII…LNIM), 616–636 (AILS…PLAL), and 656–676 (IYGL…DLLL).

It belongs to the cation transport ATPase (P-type) (TC 3.A.3) family. Type IA subfamily. In terms of assembly, the system is composed of three essential subunits: KdpA, KdpB and KdpC.

Its subcellular location is the cell inner membrane. The catalysed reaction is K(+)(out) + ATP + H2O = K(+)(in) + ADP + phosphate + H(+). Its function is as follows. Part of the high-affinity ATP-driven potassium transport (or Kdp) system, which catalyzes the hydrolysis of ATP coupled with the electrogenic transport of potassium into the cytoplasm. This subunit is responsible for energy coupling to the transport system and for the release of the potassium ions to the cytoplasm. The sequence is that of Potassium-transporting ATPase ATP-binding subunit from Escherichia coli O157:H7 (strain EC4115 / EHEC).